The chain runs to 322 residues: DNA repair and recombination protein RadA (322 aa).

105–112 (GMFGSGKT) is a binding site for ATP.

It belongs to the eukaryotic RecA-like protein family.

In terms of biological role, involved in DNA repair and in homologous recombination. Binds and assemble on single-stranded DNA to form a nucleoprotein filament. Hydrolyzes ATP in a ssDNA-dependent manner and promotes DNA strand exchange between homologous DNA molecules. The polypeptide is DNA repair and recombination protein RadA (Methanococcus maripaludis (Methanococcus deltae)).